An 80-amino-acid chain; its full sequence is Putative membrane protein insertion efficiency factor (80 aa).

Positions 61-80 (KTGKDPVPDRFSLKRNQEGE) are disordered. Over residues 62 to 80 (TGKDPVPDRFSLKRNQEGE) the composition is skewed to basic and acidic residues.

The protein belongs to the UPF0161 family.

Its subcellular location is the cell membrane. Its function is as follows. Could be involved in insertion of integral membrane proteins into the membrane. In Streptococcus pneumoniae (strain P1031), this protein is Putative membrane protein insertion efficiency factor.